The primary structure comprises 578 residues: SWR1 complex bromodomain subunit bdf1 (578 aa).

Residues 1–18 show a composition bias toward basic and acidic residues; that stretch reads MSSESRENEVKAETKDEI. 3 disordered regions span residues 1-89, 192-254, and 504-578; these read MSSE…PPPQ, DAEQ…RKNN, and ADSS…SESA. The segment covering 22–36 has biased composition (polar residues); it reads GSPQLNGDNNIQSSD. 2 stretches are compositionally biased toward basic and acidic residues: residues 37–52 and 60–77; these read GHND…KRDS and LKQE…EPTV. Residues 84-190 form the Bromo 1 domain; sequence GMPPPQQKYC…EVFERQLKQL (107 aa). Residues 219–242 show a composition bias toward low complexity; the sequence is NSSVSSTSASVAASTAPKAASPAV. Phosphoserine occurs at positions 221, 223, and 224. A Phosphothreonine modification is found at threonine 225. 2 positions are modified to phosphoserine: serine 226 and serine 239. The 110-residue stretch at 251 to 360 folds into the Bromo 2 domain; sequence RKNNSQMRFC…NVFKEKWEAR (110 aa). In terms of domain architecture, NET spans 430-510; the sequence is RRDLTKEYGP…KPDADSSEPA (81 aa). Serine 511 is modified (phosphoserine). Positions 526-537 are enriched in basic and acidic residues; sequence VLSETEQAEKIR. Positions 550-563 are enriched in polar residues; sequence TSPTSPESNNAANV. Residues 566–578 are compositionally biased toward acidic residues; that stretch reads SESDNESESSESA.

This sequence belongs to the BET family. As to quaternary structure, component of the SWR1 chromatin-remodeling complex.

The protein localises to the nucleus. Its function is as follows. Component of the SWR1 complex which mediates the ATP-dependent exchange of histone H2A for the H2A variant HZT1 leading to transcriptional regulation of selected genes by chromatin remodeling. The chain is SWR1 complex bromodomain subunit bdf1 (bdf1) from Schizosaccharomyces pombe (strain 972 / ATCC 24843) (Fission yeast).